The sequence spans 101 residues: UPF0473 protein LAF_0524 (101 aa).

It belongs to the UPF0473 family.

In Limosilactobacillus fermentum (strain NBRC 3956 / LMG 18251) (Lactobacillus fermentum), this protein is UPF0473 protein LAF_0524.